A 146-amino-acid polypeptide reads, in one-letter code: D-aminoacyl-tRNA deacylase (146 aa).

The Gly-cisPro motif, important for rejection of L-amino acids signature appears at 137–138 (GP).

This sequence belongs to the DTD family. In terms of assembly, homodimer.

It is found in the cytoplasm. The catalysed reaction is glycyl-tRNA(Ala) + H2O = tRNA(Ala) + glycine + H(+). It catalyses the reaction a D-aminoacyl-tRNA + H2O = a tRNA + a D-alpha-amino acid + H(+). An aminoacyl-tRNA editing enzyme that deacylates mischarged D-aminoacyl-tRNAs. Also deacylates mischarged glycyl-tRNA(Ala), protecting cells against glycine mischarging by AlaRS. Acts via tRNA-based rather than protein-based catalysis; rejects L-amino acids rather than detecting D-amino acids in the active site. By recycling D-aminoacyl-tRNA to D-amino acids and free tRNA molecules, this enzyme counteracts the toxicity associated with the formation of D-aminoacyl-tRNA entities in vivo and helps enforce protein L-homochirality. In Bacillus cereus (strain G9842), this protein is D-aminoacyl-tRNA deacylase.